The chain runs to 464 residues: Adenylyltransferase and sulfurtransferase MOCS3 (464 aa).

ATP is bound by residues Gly101, Asp122, 129–133 (NNMHR), Lys146, and 190–191 (DN). The Zn(2+) site is built by Cys231 and Cys234. The active-site Glycyl thioester intermediate; for adenylyltransferase activity is the Cys248. Residues Cys306 and Cys309 each contribute to the Zn(2+) site. A Rhodanese domain is found at 358 to 462 (KKEQHVLLDV…WAANVNPNFP (105 aa)). The active-site Cysteine persulfide intermediate; for sulfurtransferase activity is the Cys422.

The protein in the N-terminal section; belongs to the HesA/MoeB/ThiF family. UBA4 subfamily. Zn(2+) is required as a cofactor.

Its subcellular location is the cytoplasm. The enzyme catalyses [molybdopterin-synthase sulfur-carrier protein]-C-terminal Gly-Gly + ATP + H(+) = [molybdopterin-synthase sulfur-carrier protein]-C-terminal Gly-Gly-AMP + diphosphate. The catalysed reaction is [molybdopterin-synthase sulfur-carrier protein]-C-terminal Gly-Gly-AMP + S-sulfanyl-L-cysteinyl-[cysteine desulfurase] + AH2 = [molybdopterin-synthase sulfur-carrier protein]-C-terminal-Gly-aminoethanethioate + L-cysteinyl-[cysteine desulfurase] + A + AMP + 2 H(+). Its pathway is tRNA modification; 5-methoxycarbonylmethyl-2-thiouridine-tRNA biosynthesis. The protein operates within cofactor biosynthesis; molybdopterin biosynthesis. Plays a central role in 2-thiolation of mcm(5)S(2)U at tRNA wobble positions of cytosolic tRNA(Lys), tRNA(Glu) and tRNA(Gln). Also essential during biosynthesis of the molybdenum cofactor. Acts by mediating the C-terminal thiocarboxylation of sulfur carriers URM1 and MOCS2A. Its N-terminus first activates URM1 and MOCS2A as acyl-adenylates (-COAMP), then the persulfide sulfur on the catalytic cysteine is transferred to URM1 and MOCS2A to form thiocarboxylation (-COSH) of their C-terminus. The reaction probably involves hydrogen sulfide that is generated from the persulfide intermediate and that acts as a nucleophile towards URM1 and MOCS2A. Subsequently, a transient disulfide bond is formed. Does not use thiosulfate as sulfur donor; NFS1 probably acting as a sulfur donor for thiocarboxylation reactions. The chain is Adenylyltransferase and sulfurtransferase MOCS3 from Arabidopsis thaliana (Mouse-ear cress).